The primary structure comprises 109 residues: Spermidine export protein MdtI (109 aa).

Topologically, residues 1–5 (MAQFE) are periplasmic. The helical transmembrane segment at 6-26 (WVHAAWLALAIVLEIIANVFL) threads the bilayer. Over 27–35 (KFSDGFRRK) the chain is Cytoplasmic. The helical transmembrane segment at 36–56 (IFGLLSLAAVLAAFSALSQAV) threads the bilayer. Topologically, residues 57-63 (KGIDLSV) are periplasmic. A helical transmembrane segment spans residues 64–84 (AYALWGGFGIAATLAAGWILF). The Cytoplasmic segment spans residues 85 to 87 (GQR). A helical transmembrane segment spans residues 88–108 (LNRKGWIGLVLLLAGMIMVKL). Residue A109 is a topological domain, periplasmic.

Belongs to the drug/metabolite transporter (DMT) superfamily. Small multidrug resistance (SMR) (TC 2.A.7.1) family. MdtI subfamily. Forms a complex with MdtJ.

It localises to the cell inner membrane. In terms of biological role, catalyzes the excretion of spermidine. The polypeptide is Spermidine export protein MdtI (mdtI) (Escherichia coli O6:H1 (strain CFT073 / ATCC 700928 / UPEC)).